Reading from the N-terminus, the 154-residue chain is UPF0756 membrane protein RBAM_026200 (154 aa).

Transmembrane regions (helical) follow at residues 14-34 (AIAL…LIVI), 54-74 (WGVT…DIGF), 87-107 (WIAL…LTLL), and 117-137 (LVIG…GPLI).

This sequence belongs to the UPF0756 family.

The protein localises to the cell membrane. The protein is UPF0756 membrane protein RBAM_026200 of Bacillus velezensis (strain DSM 23117 / BGSC 10A6 / LMG 26770 / FZB42) (Bacillus amyloliquefaciens subsp. plantarum).